The primary structure comprises 702 residues: Putative GMC-type oxidoreductase R135 (702 aa).

The helical transmembrane segment at 55–75 (LTGDIVIIGAGAAGSLLAHYL) threads the bilayer. An FAD-binding site is contributed by 58–88 (DIVIIGAGAAGSLLAHYLARFSNMKIILLEA). His-628 is an active-site residue.

Belongs to the GMC oxidoreductase family. FAD serves as cofactor.

Its subcellular location is the virion. The protein localises to the host membrane. The chain is Putative GMC-type oxidoreductase R135 from Acanthamoeba polyphaga (Amoeba).